We begin with the raw amino-acid sequence, 158 residues long: MARGVNKVILIGNLGQDPEVRYTPNGNAVANVTLATSTTWRDKQTGELQERTEWHRIAFFNRLAEIVGEYLRKGSKIYIEGSLRTRKWQDKNGVDRYTTEIIANEMHMLDNRGGGNSGNYGNHSEGGASNKQSAPTSSQTPTAGDDSSVADFDDDIPF.

Residues 5-110 (VNKVILIGNL…IIANEMHMLD (106 aa)) form the SSB domain. The tract at residues 109-158 (LDNRGGGNSGNYGNHSEGGASNKQSAPTSSQTPTAGDDSSVADFDDDIPF) is disordered. The span at 129–142 (SNKQSAPTSSQTPT) shows a compositional bias: polar residues. Positions 153 to 158 (DDDIPF) match the Important for interaction with partner proteins motif.

In terms of assembly, homotetramer.

In terms of biological role, plays an important role in DNA replication, recombination and repair. Binds to ssDNA and to an array of partner proteins to recruit them to their sites of action during DNA metabolism. The protein is Single-stranded DNA-binding protein (ssb) of Coxiella burnetii (strain RSA 493 / Nine Mile phase I).